Reading from the N-terminus, the 360-residue chain is (+)-6a-hydroxymaackiain 3-O-methyltransferase 1 (360 aa).

S-adenosyl-L-methionine contacts are provided by residues 202-205 (VAGG), D226, 226-227 (DQ), 246-247 (DM), and K260. H264 functions as the Proton acceptor in the catalytic mechanism.

This sequence belongs to the class I-like SAM-binding methyltransferase superfamily. Cation-independent O-methyltransferase family. COMT subfamily.

The enzyme catalyses (+)-6a-hydroxymaackiain + S-adenosyl-L-methionine = (+)-pisatin + S-adenosyl-L-homocysteine + H(+). The catalysed reaction is a 4'-hydroxyisoflavone + S-adenosyl-L-methionine = a 4'-methoxyisoflavone + S-adenosyl-L-homocysteine + H(+). Its function is as follows. Methyltransferase involved in the phytoalexin pisatin biosynthesis. Has both 3- and 4'-O-methyltransferase activities. Can use (+)-6a-hydroxymaackiain, 2,7,4'-trihydroxyisoflavanone and with much less activity (+)-medicarpin as substrates, but not (-)-6a-hydroxymaackiain, daidzein, formononetin or isoliquiritigenin. May be involved in formononetin biosynthesis. The protein is (+)-6a-hydroxymaackiain 3-O-methyltransferase 1 (HMM1) of Pisum sativum (Garden pea).